The chain runs to 271 residues: 4-hydroxy-tetrahydrodipicolinate reductase (271 aa).

NAD(+)-binding positions include 10 to 15, E36, 100 to 102, and 124 to 127; these read GAGGRM, GTT, and SGNM. H157 acts as the Proton donor/acceptor in catalysis. H158 contacts (S)-2,3,4,5-tetrahydrodipicolinate. Residue K161 is the Proton donor of the active site. 167–168 provides a ligand contact to (S)-2,3,4,5-tetrahydrodipicolinate; it reads GT.

Belongs to the DapB family.

The protein resides in the cytoplasm. The enzyme catalyses (S)-2,3,4,5-tetrahydrodipicolinate + NAD(+) + H2O = (2S,4S)-4-hydroxy-2,3,4,5-tetrahydrodipicolinate + NADH + H(+). The catalysed reaction is (S)-2,3,4,5-tetrahydrodipicolinate + NADP(+) + H2O = (2S,4S)-4-hydroxy-2,3,4,5-tetrahydrodipicolinate + NADPH + H(+). Its pathway is amino-acid biosynthesis; L-lysine biosynthesis via DAP pathway; (S)-tetrahydrodipicolinate from L-aspartate: step 4/4. Catalyzes the conversion of 4-hydroxy-tetrahydrodipicolinate (HTPA) to tetrahydrodipicolinate. This chain is 4-hydroxy-tetrahydrodipicolinate reductase, found in Bradyrhizobium diazoefficiens (strain JCM 10833 / BCRC 13528 / IAM 13628 / NBRC 14792 / USDA 110).